We begin with the raw amino-acid sequence, 1637 residues long: Endoribonuclease Dicer homolog 3b (1637 aa).

The disordered stretch occupies residues 1–40; it reads MADDEAAVLPPPPPLPPPCRPHRQLRPRGSRPTADTTPRT. Over residues 9 to 19 the composition is skewed to pro residues; sequence LPPPPPLPPPC. Residues 20 to 29 are compositionally biased toward basic residues; it reads RPHRQLRPRG. A Helicase ATP-binding domain is found at 46-222; that stretch reads VFEAALRGNT…LHNCEAHISQ (177 aa). Residue 59–66 participates in ATP binding; sequence LDTGSGKT. Residues 169 to 172 carry the DECH box motif; it reads DECH. Positions 404 to 556 constitute a Helicase C-terminal domain; the sequence is SFGSSNEVLC…ALYRHPNALS (153 aa). The 91-residue stretch at 581-671 folds into the Dicer dsRNA-binding fold domain; that stretch reads CVNLIRKYCE…VPLTEEPMDT (91 aa). The PAZ domain maps to 882–1006; it reads EIIHLANKSL…VPPELLIHLD (125 aa). Residues 1031–1200 form the RNase III 1 domain; that stretch reads ASQLRREIGY…LVGAYYVGGG (170 aa). Mg(2+) contacts are provided by Asp1214, Asp1309, and Ser1312. Positions 1241 to 1389 constitute an RNase III 2 domain; it reads IEELEAKLKY…IAGAVFIDTD (149 aa). 2 consecutive DRBM domains span residues 1412–1481 and 1545–1629; these read LALP…DLKQ and GPRS…KLQE.

Belongs to the helicase family. Dicer subfamily. In terms of assembly, may interact with ARGONAUTE1 or PINHEAD through their common PAZ domains. It depends on Mg(2+) as a cofactor. The cofactor is Mn(2+).

The protein resides in the nucleus. In terms of biological role, probably involved in the RNA silencing pathway. May cleave double-stranded RNA to produce short 21-24 nucleotides (nt) RNAs which target the selective destruction of complementary RNAs. The chain is Endoribonuclease Dicer homolog 3b (DCL3B) from Oryza sativa subsp. japonica (Rice).